The following is a 335-amino-acid chain: Ubiquinone biosynthesis protein COQ4, mitochondrial (335 aa).

A mitochondrion-targeting transit peptide spans 1 to 10 (MLRLSLLRST). Zn(2+) contacts are provided by His-210, Asp-211, His-214, and Glu-226.

The protein belongs to the COQ4 family. In terms of assembly, component of a multi-subunit COQ enzyme complex, composed of at least COQ3, COQ4, COQ5, COQ6, COQ7 and COQ9. Interacts with COQ3. The cofactor is Zn(2+).

It localises to the mitochondrion inner membrane. The catalysed reaction is 4-hydroxy-3-methoxy-5-(all-trans-hexaprenyl)benzoate + H(+) = 2-methoxy-6-(all-trans-hexaprenyl)phenol + CO2. Its pathway is cofactor biosynthesis; ubiquinone biosynthesis. Its function is as follows. Lyase that catalyzes the C1-decarboxylation of 4-hydroxy-3-methoxy-5-(all-trans-hexaprenyl)benzoic acid into 2-methoxy-6-(all-trans-hexaprenyl)phenol during ubiquinone biosynthesis. The chain is Ubiquinone biosynthesis protein COQ4, mitochondrial from Saccharomyces cerevisiae (strain RM11-1a) (Baker's yeast).